Consider the following 355-residue polypeptide: Aromatic amino acid aminotransferase (355 aa).

At Lys-217 the chain carries N6-(pyridoxal phosphate)lysine.

The protein belongs to the class-II pyridoxal-phosphate-dependent aminotransferase family. As to quaternary structure, homodimer. The cofactor is pyridoxal 5'-phosphate.

The enzyme catalyses an aromatic L-alpha-amino acid + 2-oxoglutarate = an aromatic oxo-acid + L-glutamate. In terms of biological role, aminotransferase that catalyzes the conversion of aromatic amino acids and 2-oxoglutarate into corresponding aromatic oxo acids and L-glutamate. The chain is Aromatic amino acid aminotransferase from Mycobacterium avium (strain 104).